Here is a 92-residue protein sequence, read N- to C-terminus: uncharacterized protein (92 aa).

This is an uncharacterized protein from Escherichia coli (strain K12).